A 121-amino-acid polypeptide reads, in one-letter code: Type II secretion system protein I (121 aa).

Positions 1–6 (MNKQKG) are cleaved as a propeptide — leader sequence. Met7 carries the N-methylmethionine modification. A helical transmembrane segment spans residues 7–27 (MTLLEVLVALAIFSLAGLTLL).

It belongs to the GSP I family. In terms of assembly, type II secretion is composed of four main components: the outer membrane complex, the inner membrane complex, the cytoplasmic secretion ATPase and the periplasm-spanning pseudopilus. Interacts with core component PulG. Interacts with pseudopilins PulJ and PulK. Cleaved by prepilin peptidase. In terms of processing, methylated by prepilin peptidase at the amino group of the N-terminal methionine once the leader sequence is cleaved by prepilin peptidase.

Its subcellular location is the cell inner membrane. Component of the type II secretion system required for the energy-dependent secretion of extracellular factors such as proteases and toxins from the periplasm. Part of the pseudopilus tip complex that is critical for the recognition and binding of secretion substrates. This Klebsiella michiganensis (strain ATCC 8724 / DSM 4798 / JCM 20051 / NBRC 3318 / NRRL B-199 / KCTC 1686 / BUCSAV 143 / CCM 1901) protein is Type II secretion system protein I (pulI).